The following is a 492-amino-acid chain: RNA helicase CrhR (492 aa).

The Q motif signature appears at 7-35; the sequence is STFADLGLSEKRCQLLADIGFEAPTQIQT. Residues 38 to 207 form the Helicase ATP-binding domain; it reads IPLLLSGRDM…NQFLNDPALV (170 aa). 51–58 is an ATP binding site; the sequence is SQTGTGKT. Positions 155–158 match the DEAD box motif; the sequence is DEAD. The 146-residue stretch at 234–379 folds into the Helicase C-terminal domain; the sequence is KALQPILEME…VCTIPNRSQV (146 aa). The interval 451–492 is disordered; the sequence is VLRRGRNAGGGQNKSGGGYQGKPGKPRRSSGGRRPAYSDRQQ. The segment covering 457–471 has biased composition (gly residues); sequence NAGGGQNKSGGGYQG.

This sequence belongs to the DEAD box helicase family.

The protein localises to the cytoplasm. It localises to the cell inner membrane. It is found in the cellular thylakoid membrane. It carries out the reaction ATP + H2O = ADP + phosphate + H(+). Helicase inhibited by the slowly-hydrolyzing ATP analog ATP-gamma-S. Protein is rapidly degraded upon shifting from 20 to 30 degrees Celsius, the degradation machinery is only transiently present in cells grown at 30 degrees Celsius, is inhibited by commercial protease inhibitors and requires full-length protein expression (the N-terminal fragment does not induce proteolysis although it can be degraded by wild-type extract). In terms of biological role, an ATP-dependent bidirectional RNA helicase with RNA-dependent ATPase activity; does not unwind dsDNA, uses only (d)ATP. Also has ATP-dependent RNA annealing activity; concurrent annealing and helicase activity promote strand-exchange activity. In vitro has low helicase processivity, annealing processivity is probably higher. Required for correct cold adaptation, probably by aiding translation of mRNAs required for photosynthesis and electron transport. Probably regulates the cold-shock-inducible expression of the GroESL chaperones. May partially regulate its own expression at both the transcriptional and post-transcriptional level (experiments used a construct expressing a 25 kDa trunacted protein which might have dominant-negative effects); is probably not directly involved in the pathway responsible for mRNA degradation. The chain is RNA helicase CrhR from Synechocystis sp. (strain ATCC 27184 / PCC 6803 / Kazusa).